Reading from the N-terminus, the 201-residue chain is Ribonuclease HII (201 aa).

One can recognise an RNase H type-2 domain in the interval 15–201 (AIIAGVDEAG…FAPIKAYGAP (187 aa)). Residues Asp21, Glu22, and Asp113 each coordinate a divalent metal cation.

This sequence belongs to the RNase HII family. It depends on Mn(2+) as a cofactor. Mg(2+) serves as cofactor.

Its subcellular location is the cytoplasm. It carries out the reaction Endonucleolytic cleavage to 5'-phosphomonoester.. Its function is as follows. Endonuclease that specifically degrades the RNA of RNA-DNA hybrids. The polypeptide is Ribonuclease HII (Bordetella pertussis (strain Tohama I / ATCC BAA-589 / NCTC 13251)).